The following is a 232-amino-acid chain: Cysteine proteinase inhibitor 7 (232 aa).

The N-terminal stretch at 1 to 29 (MDMRRASMCMMLICVSLVLLSGFGQFVIC) is a signal peptide. Cystatin domains lie at 46-135 (GGFS…KNII) and 152-214 (FDWR…ERGN). Positions 91–95 (QVVAG) match the Secondary area of contact motif. Phosphoserine is present on S181.

It belongs to the cystatin family. Phytocystatin subfamily.

It is found in the secreted. Specific inhibitor of cysteine proteinases. Probably involved in the regulation of endogenous processes and in defense against pests and pathogens. The protein is Cysteine proteinase inhibitor 7 (CYS7) of Arabidopsis thaliana (Mouse-ear cress).